The chain runs to 181 residues: Large ribosomal subunit protein uL5 (181 aa).

This sequence belongs to the universal ribosomal protein uL5 family. Part of the 50S ribosomal subunit; part of the 5S rRNA/L5/L18/L25 subcomplex. Contacts the 5S rRNA and the P site tRNA. Forms a bridge to the 30S subunit in the 70S ribosome.

This is one of the proteins that bind and probably mediate the attachment of the 5S RNA into the large ribosomal subunit, where it forms part of the central protuberance. In the 70S ribosome it contacts protein S13 of the 30S subunit (bridge B1b), connecting the 2 subunits; this bridge is implicated in subunit movement. Contacts the P site tRNA; the 5S rRNA and some of its associated proteins might help stabilize positioning of ribosome-bound tRNAs. In Trichodesmium erythraeum (strain IMS101), this protein is Large ribosomal subunit protein uL5.